A 278-amino-acid polypeptide reads, in one-letter code: Small ribosomal subunit protein uS2 (278 aa).

Disordered regions lie at residues 216-235 (EAAA…TQWD) and 250-278 (NFAA…EWTN). Positions 256 to 278 (ADGNWGATTGGDWAAAGGEEWTN) are enriched in low complexity.

Belongs to the universal ribosomal protein uS2 family. Component of the small ribosomal subunit. Mature ribosomes consist of a small (40S) and a large (60S) subunit. The 40S subunit contains about 33 different proteins and 1 molecule of RNA (18S). The 60S subunit contains about 49 different proteins and 3 molecules of RNA (25S, 5.8S and 5S). Interacts with ribosomal protein S21.

It is found in the cytoplasm. Required for the assembly and/or stability of the 40S ribosomal subunit. Required for the processing of the 20S rRNA-precursor to mature 18S rRNA in a late step of the maturation of 40S ribosomal subunits. The chain is Small ribosomal subunit protein uS2 from Monosiga brevicollis (Choanoflagellate).